The following is a 370-amino-acid chain: 3,5-dihydroxyphenylacetyl-CoA synthase (370 aa).

Cys-158 is a catalytic residue.

It belongs to the thiolase-like superfamily. Chalcone/stilbene synthases family.

It catalyses the reaction 4 malonyl-CoA + 4 H(+) = (3,5-dihydroxyphenyl)acetyl-CoA + 4 CO2 + 3 CoA + H2O. Its pathway is antibiotic biosynthesis; vancomycin biosynthesis. Functionally, involved in the biosynthesis of the nonproteinogenic amino acid monomer (S)-3,5-dihydroxyphenylglycine (Dpg) responsible of the production of vancomycin and teicoplanin antibiotics. Catalyzes the Claisen condensation of four molecules of malonyl-CoA to yield 3,5-dihydroxyphenylacetyl-CoA (DPA-CoA) and three free coenzyme A (CoA). DpgA requires the presence of the dehydratases DpgB and DpgD to facilitate the aromatization of the DPA-S-DgpA or DPA-S-CoA intermediate. This Amycolatopsis orientalis (Nocardia orientalis) protein is 3,5-dihydroxyphenylacetyl-CoA synthase (dpgA).